The sequence spans 188 residues: Ion-translocating oxidoreductase complex subunit B (188 aa).

A hydrophobic region spans residues 1 to 23 (MFTAIWVMVGLAIAIGLILGWSA). The 60-residue stretch at 29 to 88 (EGNPLAEKIDAILPQTQCGQCGFPGCRPYAEAIAKGEADINQCPPGGEEGVKKLAELLGV) folds into the 4Fe-4S domain. Residues cysteine 46, cysteine 49, cysteine 54, cysteine 71, cysteine 113, cysteine 116, cysteine 119, cysteine 123, cysteine 143, cysteine 146, cysteine 149, and cysteine 153 each coordinate [4Fe-4S] cluster. 4Fe-4S ferredoxin-type domains are found at residues 104–133 (SVAF…GAAK) and 134–163 (QMHT…MVPI).

This sequence belongs to the 4Fe4S bacterial-type ferredoxin family. RnfB subfamily. As to quaternary structure, the complex is composed of six subunits: RnfA, RnfB, RnfC, RnfD, RnfE and RnfG. Requires [4Fe-4S] cluster as cofactor.

It is found in the cell inner membrane. Its function is as follows. Part of a membrane-bound complex that couples electron transfer with translocation of ions across the membrane. The protein is Ion-translocating oxidoreductase complex subunit B of Thiobacillus denitrificans (strain ATCC 25259 / T1).